The primary structure comprises 315 residues: Homoserine O-succinyltransferase (315 aa).

Catalysis depends on C142, which acts as the Acyl-thioester intermediate. 2 residues coordinate substrate: K163 and S192. The Proton acceptor role is filled by H235. The active site involves E237. Substrate is bound at residue R249. The span at 249–258 (RDCEKSDNAP) shows a compositional bias: basic and acidic residues. The disordered stretch occupies residues 249 to 271 (RDCEKSDNAPKPENYFPDDDATK).

It belongs to the MetA family.

It localises to the cytoplasm. It catalyses the reaction L-homoserine + succinyl-CoA = O-succinyl-L-homoserine + CoA. The protein operates within amino-acid biosynthesis; L-methionine biosynthesis via de novo pathway; O-succinyl-L-homoserine from L-homoserine: step 1/1. In terms of biological role, transfers a succinyl group from succinyl-CoA to L-homoserine, forming succinyl-L-homoserine. The protein is Homoserine O-succinyltransferase of Pseudoalteromonas translucida (strain TAC 125).